Here is a 140-residue protein sequence, read N- to C-terminus: Endoribonuclease YbeY (140 aa).

Zn(2+)-binding residues include H100, H104, and H110.

Belongs to the endoribonuclease YbeY family. Requires Zn(2+) as cofactor.

Its subcellular location is the cytoplasm. Single strand-specific metallo-endoribonuclease involved in late-stage 70S ribosome quality control and in maturation of the 3' terminus of the 16S rRNA. In Helicobacter pylori (strain ATCC 700392 / 26695) (Campylobacter pylori), this protein is Endoribonuclease YbeY.